The sequence spans 152 residues: Endoribonuclease YbeY (152 aa).

Positions 118, 122, and 128 each coordinate Zn(2+).

The protein belongs to the endoribonuclease YbeY family. The cofactor is Zn(2+).

The protein localises to the cytoplasm. In terms of biological role, single strand-specific metallo-endoribonuclease involved in late-stage 70S ribosome quality control and in maturation of the 3' terminus of the 16S rRNA. The chain is Endoribonuclease YbeY from Pelotomaculum thermopropionicum (strain DSM 13744 / JCM 10971 / SI).